A 387-amino-acid chain; its full sequence is ERBB-3 BINDING PROTEIN 1 (387 aa).

Necessary for nucleolar localization stretches follow at residues 1-49 and 297-387; these read MSDD…IVDL and LLQP…PMEG. Residues 47–55 are RNA-binding; sequence VDLCEKGDA. Residues 337–387 form a disordered region; sequence LQPTKTTENEPEIKAWLALPTKTKKKGGGKKKKGKKGDKVEEASQAEPMEG. The interval 356–373 is interaction with RNA; it reads PTKTKKKGGGKKKKGKKG. Over residues 358-372 the composition is skewed to basic residues; it reads KTKKKGGGKKKKGKK. The short motif at 360–369 is the Nuclear localization signal element; that stretch reads KKKGGGKKKK.

It belongs to the peptidase M24 family. In terms of assembly, component of a ribonucleoprotein complex. As to expression, expressed during tuberisation and in roots, nodes, internodes, petioles, leaves, stolons, tubers and sprouts.

It localises to the nucleus. Its function is as follows. Binds RNA. Associates with 28S, 18S and 5.8S mature rRNAs, several rRNA precursors and probably U3 small nucleolar RNA. May be involved in regulation of intermediate and late steps of rRNA processing. May be involved in ribosome assembly. Required for expression of cell cycle genes such as CYCD3-1, RNR2A and CDKB1-1. Promotes, in a dose- and auxin-dependent manner, organ growth by stimulating both cell proliferation and expansion, via the regulation of RBR1 levels. The protein is ERBB-3 BINDING PROTEIN 1 of Solanum tuberosum (Potato).